The following is a 301-amino-acid chain: tRNA dimethylallyltransferase (301 aa).

ATP is bound at residue 2-9 (GPTASGKT). 4 to 9 (TASGKT) contacts substrate. Interaction with substrate tRNA stretches follow at residues 27 to 30 (DSAM) and 151 to 155 (QRIQR).

The protein belongs to the IPP transferase family. As to quaternary structure, monomer. It depends on Mg(2+) as a cofactor.

The enzyme catalyses adenosine(37) in tRNA + dimethylallyl diphosphate = N(6)-dimethylallyladenosine(37) in tRNA + diphosphate. Its function is as follows. Catalyzes the transfer of a dimethylallyl group onto the adenine at position 37 in tRNAs that read codons beginning with uridine, leading to the formation of N6-(dimethylallyl)adenosine (i(6)A). This is tRNA dimethylallyltransferase from Coxiella burnetii (strain CbuK_Q154) (Coxiella burnetii (strain Q154)).